A 500-amino-acid chain; its full sequence is Phenylalanine--tRNA ligase alpha subunit (500 aa).

L-phenylalanine is bound by residues Thr343, 382 to 384 (QID), and Phe423. Residue Glu425 participates in Mg(2+) binding. Phe448 serves as a coordination point for L-phenylalanine.

The protein belongs to the class-II aminoacyl-tRNA synthetase family. Phe-tRNA synthetase alpha subunit type 2 subfamily. Tetramer of two alpha and two beta subunits. It depends on Mg(2+) as a cofactor.

The protein localises to the cytoplasm. The enzyme catalyses tRNA(Phe) + L-phenylalanine + ATP = L-phenylalanyl-tRNA(Phe) + AMP + diphosphate + H(+). This chain is Phenylalanine--tRNA ligase alpha subunit, found in Pyrococcus abyssi (strain GE5 / Orsay).